The chain runs to 207 residues: Large ribosomal subunit protein uL4 (207 aa).

Positions 52–75 (KNRSAVRGGGKKPWRQKGTGRARQ) are disordered. Basic residues predominate over residues 60-71 (GGKKPWRQKGTG).

Belongs to the universal ribosomal protein uL4 family. Part of the 50S ribosomal subunit.

In terms of biological role, one of the primary rRNA binding proteins, this protein initially binds near the 5'-end of the 23S rRNA. It is important during the early stages of 50S assembly. It makes multiple contacts with different domains of the 23S rRNA in the assembled 50S subunit and ribosome. Forms part of the polypeptide exit tunnel. The polypeptide is Large ribosomal subunit protein uL4 (Limosilactobacillus fermentum (strain NBRC 3956 / LMG 18251) (Lactobacillus fermentum)).